Consider the following 138-residue polypeptide: MLKEFREFAMKGNVVDLAVGVIIGAAFGAIVTSLVGDVIMPLIGAVTGGLDFSNYFTPLSKAVTATNLADAKKQGAVLAWGSFLTLTINFIIIAFVLFLVIRAINTLKRKEEAAPAAPPKPSAEVELLTEIRDLLKKS.

A run of 2 helical transmembrane segments spans residues 19-39 (VGVI…GDVI) and 81-101 (GSFL…FLVI).

The protein belongs to the MscL family. Homopentamer.

It is found in the cell inner membrane. Channel that opens in response to stretch forces in the membrane lipid bilayer. May participate in the regulation of osmotic pressure changes within the cell. This chain is Large-conductance mechanosensitive channel, found in Bradyrhizobium diazoefficiens (strain JCM 10833 / BCRC 13528 / IAM 13628 / NBRC 14792 / USDA 110).